A 282-amino-acid chain; its full sequence is Putative hydrolase Bmul_3283/BMULJ_05242 (282 aa).

Mg(2+) contacts are provided by glutamate 124, glutamate 126, and aspartate 155.

This sequence belongs to the FAH family. Requires Mg(2+) as cofactor.

The polypeptide is Putative hydrolase Bmul_3283/BMULJ_05242 (Burkholderia multivorans (strain ATCC 17616 / 249)).